The sequence spans 122 residues: Large ribosomal subunit protein uL24 (122 aa).

Belongs to the universal ribosomal protein uL24 family. As to quaternary structure, part of the 50S ribosomal subunit.

In terms of biological role, one of two assembly initiator proteins, it binds directly to the 5'-end of the 23S rRNA, where it nucleates assembly of the 50S subunit. One of the proteins that surrounds the polypeptide exit tunnel on the outside of the subunit. The chain is Large ribosomal subunit protein uL24 from Renibacterium salmoninarum (strain ATCC 33209 / DSM 20767 / JCM 11484 / NBRC 15589 / NCIMB 2235).